We begin with the raw amino-acid sequence, 1243 residues long: Inositol hexakisphosphate and diphosphoinositol-pentakisphosphate kinase 2 (1243 aa).

Serine 38 carries the post-translational modification Phosphoserine. 53–54 is a binding site for substrate; sequence KK. ATP is bound by residues arginine 134, lysine 187, histidine 194, and arginine 213. 213–214 is a substrate binding site; the sequence is RK. At serine 223 the chain carries Phosphoserine. Residues 237–240 and 246–248 each bind ATP; these read EEFM and DVK. Residues lysine 248 and arginine 262 each coordinate substrate. Residues serine 264, aspartate 309, and 321 to 323 each bind ATP; that span reads DVN. 326-329 contacts substrate; it reads SFVK. The interval 371–442 is polyphosphoinositide-binding domain; it reads PTTSGTMMEL…VLDIARQLLM (72 aa). Disordered regions lie at residues 898–941 and 957–1016; these read KGCE…RDEV and HIHR…SPVS. Residues 915–941 are compositionally biased toward basic and acidic residues; it reads ASRENEGRRPFKIDNDDEPHTSKRDEV. Residues 958–969 show a composition bias toward basic residues; the sequence is IHRKSPLPRSRK. Phosphoserine is present on residues serine 1006, serine 1016, serine 1074, serine 1091, serine 1165, serine 1172, and serine 1180. Residues 1185-1243 are disordered; the sequence is TPAKILPTPPATLKSTKASSKPATSGPSSAVVPNTSSRKKNITSKTETHEHKKNTGKKK. Over residues 1195 to 1209 the composition is skewed to low complexity; sequence ATLKSTKASSKPATS. A compositionally biased stretch (polar residues) spans 1210 to 1220; sequence GPSSAVVPNTS. Residues serine 1220 and serine 1221 each carry the phosphoserine modification.

This sequence belongs to the histidine acid phosphatase family. VIP1 subfamily.

The protein localises to the cytoplasm. Its subcellular location is the cytosol. It catalyses the reaction 1D-myo-inositol hexakisphosphate + ATP = 1-diphospho-1D-myo-inositol 2,3,4,5,6-pentakisphosphate + ADP. The catalysed reaction is 5-diphospho-1D-myo-inositol 1,2,3,4,6-pentakisphosphate + ATP + H(+) = 1,5-bis(diphospho)-1D-myo-inositol 2,3,4,6-tetrakisphosphate + ADP. Its function is as follows. Bifunctional inositol kinase that acts in concert with the IP6K kinases IP6K1, IP6K2 and IP6K3 to synthesize the diphosphate group-containing inositol pyrophosphates diphosphoinositol pentakisphosphate, PP-InsP5, and bis-diphosphoinositol tetrakisphosphate, (PP)2-InsP4. PP-InsP5 and (PP)2-InsP4, also respectively called InsP7 and InsP8, regulate a variety of cellular processes, including apoptosis, vesicle trafficking, cytoskeletal dynamics, exocytosis, insulin signaling and neutrophil activation. Phosphorylates inositol hexakisphosphate (InsP6) at position 1 to produce PP-InsP5 which is in turn phosphorylated by IP6Ks to produce (PP)2-InsP4. Alternatively, phosphorylates PP-InsP5 at position 1, produced by IP6Ks from InsP6, to produce (PP)2-InsP4. Required for normal hearing. The protein is Inositol hexakisphosphate and diphosphoinositol-pentakisphosphate kinase 2 of Homo sapiens (Human).